A 162-amino-acid polypeptide reads, in one-letter code: uncharacterized protein (162 aa).

This is an uncharacterized protein from Frog virus 3 (isolate Goorha) (FV-3).